A 322-amino-acid chain; its full sequence is Putative nickel/cobalt efflux system HI_1248 (322 aa).

The next 6 membrane-spanning stretches (helical) occupy residues 7–27, 54–74, 100–120, 137–157, 228–248, and 294–314; these read GLVL…WFFL, AGTT…LGPG, LSSL…VVVL, TALL…LRAY, IFVL…LAVL, and LIAG…TTIS.

Belongs to the NiCoT transporter (TC 2.A.52) family.

Its subcellular location is the cell membrane. Efflux system for nickel and cobalt. The sequence is that of Putative nickel/cobalt efflux system HI_1248 from Haemophilus influenzae (strain ATCC 51907 / DSM 11121 / KW20 / Rd).